The sequence spans 117 residues: MDKKVARIRRATRARHLMREQGATRLVVHRTPRHIYAQVIAPNGSEVLAAASTVEKVIKEQVKYTGNKDAAAVVGKLVAERALAKGIQAVAFDRSGFKYHGRVQVLADAAREAGLQF.

This sequence belongs to the universal ribosomal protein uL18 family. As to quaternary structure, part of the 50S ribosomal subunit; part of the 5S rRNA/L5/L18/L25 subcomplex. Contacts the 5S and 23S rRNAs.

This is one of the proteins that bind and probably mediate the attachment of the 5S RNA into the large ribosomal subunit, where it forms part of the central protuberance. The chain is Large ribosomal subunit protein uL18 from Actinobacillus pleuropneumoniae serotype 5b (strain L20).